Reading from the N-terminus, the 288-residue chain is Cyclin-dependent kinase 2 homolog (288 aa).

Residues 4–284 enclose the Protein kinase domain; the sequence is YHGLEKIGEG…AKEALQHAYF (281 aa). ATP is bound by residues 10-18 and lysine 32; that span reads IGEGTYGVV. At threonine 14 the chain carries Phosphothreonine. Phosphotyrosine is present on tyrosine 15. Aspartate 125 serves as the catalytic Proton acceptor. A Phosphothreonine modification is found at threonine 158.

The protein belongs to the protein kinase superfamily. CMGC Ser/Thr protein kinase family. CDC2/CDKX subfamily. May form a complex composed of at least the catalytic subunit CRK2 and a cyclin. It depends on Mg(2+) as a cofactor.

The protein localises to the cytoplasm. It catalyses the reaction L-seryl-[protein] + ATP = O-phospho-L-seryl-[protein] + ADP + H(+). The enzyme catalyses L-threonyl-[protein] + ATP = O-phospho-L-threonyl-[protein] + ADP + H(+). The catalysed reaction is [DNA-directed RNA polymerase] + ATP = phospho-[DNA-directed RNA polymerase] + ADP + H(+). With respect to regulation, phosphorylation at Thr-14 or Tyr-15 inactivates the enzyme, while phosphorylation at Thr-158 activates it. Its function is as follows. Serine/threonine-protein kinase. Involved in the control of the cell cycle. Required for entry into S-phase and mitosis. Probable component of the kinase complex that phosphorylates the repetitive C-terminus of RNA polymerase II. The chain is Cyclin-dependent kinase 2 homolog from Plasmodium knowlesi (strain H).